Consider the following 468-residue polypeptide: Serine/threonine-protein kinase ULK3 (468 aa).

Residues 13-269 (FILTEKLGSG…FIEFFAHLFV (257 aa)) form the Protein kinase domain. Residues 19–27 (LGSGSYATV) and Lys-43 contribute to the ATP site. The active-site Proton acceptor is Asp-136. 2 MIT domains span residues 279–347 (TLEK…KVLV) and 374–442 (RLFS…KEQM).

The protein belongs to the protein kinase superfamily. Ser/Thr protein kinase family. APG1/unc-51/ULK1 subfamily.

It is found in the cytoplasm. The enzyme catalyses L-seryl-[protein] + ATP = O-phospho-L-seryl-[protein] + ADP + H(+). It carries out the reaction L-threonyl-[protein] + ATP = O-phospho-L-threonyl-[protein] + ADP + H(+). Serine/threonine protein kinase that acts as a regulator of Sonic hedgehog (SHH) signaling and autophagy. This is Serine/threonine-protein kinase ULK3 (ulk3) from Xenopus laevis (African clawed frog).